The following is a 531-amino-acid chain: UPF0159 protein CPn_0746/CP_1126/CPj0746/CpB0774 (531 aa).

ThyX domains are found at residues 38–274 (KGAL…AEPH) and 309–511 (PSVQ…FKFV).

The protein belongs to the UPF0159 family.

In Chlamydia pneumoniae (Chlamydophila pneumoniae), this protein is UPF0159 protein CPn_0746/CP_1126/CPj0746/CpB0774.